The primary structure comprises 122 residues: Basic phospholipase A2 LmTX-II (122 aa).

Disulfide bonds link cysteine 26-cysteine 115, cysteine 28-cysteine 44, cysteine 43-cysteine 95, cysteine 49-cysteine 122, cysteine 50-cysteine 88, and cysteine 75-cysteine 86. Ca(2+) contacts are provided by tyrosine 27, glycine 29, and glycine 31. Histidine 47 is an active-site residue. Residue aspartate 48 coordinates Ca(2+). Residue aspartate 89 is part of the active site.

As to quaternary structure, monomer. Ca(2+) serves as cofactor. Expressed by the venom gland.

It localises to the secreted. The enzyme catalyses a 1,2-diacyl-sn-glycero-3-phosphocholine + H2O = a 1-acyl-sn-glycero-3-phosphocholine + a fatty acid + H(+). Functionally, snake venom phospholipase A2 (PLA2) that may display neurotoxic and myotoxic activities. May induce inflammatory edema by mechanisms involving mast cell activation and arachidonic acid metabolites. May increase plasma creatine kinase activity. PLA2 catalyzes the calcium-dependent hydrolysis of the 2-acyl groups in 3-sn-phosphoglycerides. The sequence is that of Basic phospholipase A2 LmTX-II from Lachesis muta muta (Bushmaster).